Here is a 68-residue protein sequence, read N- to C-terminus: Molybdenum-pterin-binding protein 3 (68 aa).

Residues 2-68 (SISARNQLKG…IKSTDVMILA (67 aa)) enclose the Mop domain.

Functionally, binds one mole of molybdenum per mole of protein and contains a pterin. The chain is Molybdenum-pterin-binding protein 3 (mopIII) from Clostridium pasteurianum.